We begin with the raw amino-acid sequence, 215 residues long: Pyrrolidone-carboxylate peptidase (215 aa).

Catalysis depends on residues Glu-80, Cys-143, and His-167.

The protein belongs to the peptidase C15 family. Homotetramer.

It is found in the cytoplasm. The enzyme catalyses Release of an N-terminal pyroglutamyl group from a polypeptide, the second amino acid generally not being Pro.. Functionally, removes 5-oxoproline from various penultimate amino acid residues except L-proline. The polypeptide is Pyrrolidone-carboxylate peptidase (Bacillus thuringiensis (strain Al Hakam)).